The chain runs to 213 residues: GTP cyclohydrolase 1 (213 aa).

Positions 104, 107, and 175 each coordinate Zn(2+).

This sequence belongs to the GTP cyclohydrolase I family. As to quaternary structure, toroid-shaped homodecamer, composed of two pentamers of five dimers.

The catalysed reaction is GTP + H2O = 7,8-dihydroneopterin 3'-triphosphate + formate + H(+). It functions in the pathway cofactor biosynthesis; 7,8-dihydroneopterin triphosphate biosynthesis; 7,8-dihydroneopterin triphosphate from GTP: step 1/1. The protein is GTP cyclohydrolase 1 of Brucella abortus (strain 2308).